The following is a 394-amino-acid chain: 2-aminobenzenesulfonate 2,3-dioxygenase subunit alpha (394 aa).

In terms of domain architecture, Rieske spans 43-154; sequence WKFVCHVSEI…TETYLGLVFV (112 aa). Positions 85, 87, 105, and 108 each coordinate [2Fe-2S] cluster. Fe cation-binding residues include histidine 209 and histidine 213.

Belongs to the bacterial ring-hydroxylating dioxygenase alpha subunit family. Heterotetramer with a alpha2beta2 structure. It depends on [2Fe-2S] cluster as a cofactor. The cofactor is Fe cation.

The catalysed reaction is 2-aminobenzenesulfonate + NADH + O2 + 2 H(+) = 2,3-dihydroxybenzenesulfonate + NH4(+) + NAD(+). Inhibited by o-phenanthroline. Alpha subunit of the oxygenase component of the 2-aminobenzenesulfonate 2,3-dioxygenase system (deaminating) (ABSDOS). Can use 2-aminobenzenesulfonate (ABS), benzenesulfonate (BS), 4-toluenesulfonate (TS), 2-nitrobenzenesulfonate, 3- and 4-aminobenzenesulfonates, 4-chloro- and 4-hydroxybenzenesulfonates and pyridine-3-sulfonate as substrates. No desulfonation of ABS to aminocatechol or aminophenol detected. The chain is 2-aminobenzenesulfonate 2,3-dioxygenase subunit alpha from Alcaligenes sp.